Here is a 433-residue protein sequence, read N- to C-terminus: Type I acyl-CoA thioesterase mpaH (433 aa).

The abhydrolase domain stretch occupies residues 58–246; sequence HGVGLPKELY…VKARFDAAAD (189 aa). V60 provides a ligand contact to substrate. S139 serves as the catalytic Nucleophile. F140 is a binding site for substrate. Catalysis depends on residues D163 and H365.

It belongs to the AB hydrolase superfamily. MpaH hydrolase family. In terms of assembly, homodimer.

It localises to the peroxisome matrix. It catalyses the reaction mycophenolyl-CoA + H2O = mycophenolate + CoA + H(+). It functions in the pathway secondary metabolite biosynthesis; terpenoid biosynthesis. Functionally, type I acyl-CoA thioesterase; part of the gene cluster that mediates the biosynthesis of mycophenolic acid (MPA), the first isolated antibiotic natural product in the world obtained from a culture of Penicillium brevicompactum in 1893. MpaH acts as a peroxisomal acyl-CoA hydrolase that converts MPA-CoA into the final product MPA. The first step of the pathway is the synthesis of 5-methylorsellinic acid (5MOA) by the cytosolic polyketide synthase mpaC. 5MOA is then converted to the phthalide compound 5,7-dihydroxy-4,6-dimethylphthalide (DHMP) by the endoplasmic reticulum-bound cytochrome P450 monooxygenase mpaDE. MpaDE first catalyzes hydroxylation of 5-MOA to 4,6-dihydroxy-2-(hydroxymethyl)-3-methylbenzoic acid (DHMB). MpaDE then acts as a lactone synthase that catalyzes the ring closure to convert DHMB into DHMP. The next step is the prenylation of DHMP by the Golgi apparatus-associated prenyltransferase mpaA to yield farnesyl-DHMP (FDHMP). The ER-bound oxygenase mpaB then mediates the oxidative cleavage the C19-C20 double bond in FDHMP to yield FDHMP-3C via a mycophenolic aldehyde intermediate. The O-methyltransferase mpaG catalyzes the methylation of FDHMP-3C to yield MFDHMP-3C. After the cytosolic methylation of FDHMP-3C, MFDHMP-3C enters into peroxisomes probably via free diffusion due to its low molecular weight. Upon a peroxisomal CoA ligation reaction, catalyzed by a beta-oxidation component enzyme acyl-CoA ligase ACL891, MFDHMP-3C-CoA would then be restricted to peroxisomes for the following beta-oxidation pathway steps. The peroxisomal beta-oxidation machinery than converts MFDHMP-3C-CoA into MPA_CoA, via a beta-oxidation chain-shortening process. Finally mpaH acts as a peroxisomal acyl-CoA hydrolase with high substrate specificity toward MPA-CoA to release the final product MPA. The protein is Type I acyl-CoA thioesterase mpaH of Penicillium roqueforti (strain FM164).